Consider the following 749-residue polypeptide: ATP-dependent zinc metalloprotease FtsH 3 (749 aa).

Positions 1–17 are enriched in basic and acidic residues; sequence MTGDPPERRSNGDRLPA. The disordered stretch occupies residues 1–67; that stretch reads MTGDPPERRS…GRNGGGMRPF (67 aa). Residues 1 to 75 lie on the Cytoplasmic side of the membrane; that stretch reads MTGDPPERRS…PFRFPGGRWG (75 aa). Residues 76 to 96 form a helical membrane-spanning segment; that stretch reads ILVFILVLLGLNWWISSNALA. Over 97-186 the chain is Extracellular; that stretch reads PSERVRVPYS…NASPADNGPS (90 aa). Residues 187–207 traverse the membrane as a helical segment; that stretch reads LLVSILLGFGPVILIIALFVF. Residues 208-749 are Cytoplasmic-facing; sequence LSRRMAGAAG…LGGSVRAGDA (542 aa). 281–288 serves as a coordination point for ATP; it reads GQPGTGKT. Histidine 504 is a binding site for Zn(2+). Residue glutamate 505 is part of the active site. Residues histidine 508 and aspartate 580 each contribute to the Zn(2+) site. Basic and acidic residues predominate over residues 679 to 689; sequence GLEHMRPERVE. A disordered region spans residues 679-749; the sequence is GLEHMRPERV…LGGSVRAGDA (71 aa).

This sequence in the central section; belongs to the AAA ATPase family. It in the C-terminal section; belongs to the peptidase M41 family. In terms of assembly, homohexamer. Requires Zn(2+) as cofactor.

The protein resides in the cell membrane. Acts as a processive, ATP-dependent zinc metallopeptidase for both cytoplasmic and membrane proteins. Plays a role in the quality control of integral membrane proteins. This chain is ATP-dependent zinc metalloprotease FtsH 3, found in Conexibacter woesei (strain DSM 14684 / CCUG 47730 / CIP 108061 / JCM 11494 / NBRC 100937 / ID131577).